The chain runs to 304 residues: uncharacterized protein (304 aa).

9 consecutive transmembrane segments (helical) span residues Val-9–Phe-29, Ile-67–Phe-87, Ala-100–Phe-120, Glu-131–Ser-151, Phe-159–Ile-179, Ala-189–Phe-209, Ile-222–Met-242, Ile-252–Leu-272, and Ile-278–Lys-298. 2 consecutive EamA domains span residues Leu-13–Ile-148 and Phe-171–Lys-298.

It belongs to the EamA transporter family.

Its subcellular location is the cell membrane. This is an uncharacterized protein from Haemophilus influenzae (strain ATCC 51907 / DSM 11121 / KW20 / Rd).